Reading from the N-terminus, the 246-residue chain is Homeobox protein Crxos (246 aa).

DNA-binding regions (homeobox) lie at residues 22-72 (WEQL…EMRP) and 129-182 (ELTD…RGYR). Positions 163–177 (RKDLIRSWFITQRHR) match the Nuclear localization signal motif.

Belongs to the paired homeobox family. As to expression, specifically expressed during the preimplantation stages of embryonic development, between the four-cell to eight-cell stage and the morula stage. Expressed in adult testis. Detected in early embryos; expression decreases gradually with embryonic development. Also expressed in extraembryonic tissues after E14.5, expression level increases drastically until E18.5, immediately before partum.

Its subcellular location is the nucleus. In terms of biological role, transcription factor that acts as a regulator of embryonic stem cell differentiation during the preimplantation stages of embryonic development. Functionally, transcription factor that acts as a positive regulator of embryonic stem cell differentiation. Its function is as follows. Transcription factor that promotes embryonic stem cell pluripotency. Transcription factor that promotes embryonic stem cell pluripotency. Also involved in extraembryonic tissues development by promoting the expression of placental prolactin family genes. The chain is Homeobox protein Crxos from Mus musculus (Mouse).